The chain runs to 158 residues: MRCPYCGSEDTQVKDSRPAEDNTSIRRRRICPDCGGRFTTFERVQLRELMVIKKTGRKVPFDRDKLVRSFEVALRKRPVERDRIERAVSGIVRRLESSGETEISSEQIGLQVLEAMKSLDDVGFVRYASVYRDFSLAEDFEKVISEINAKIARDPLDR.

The segment at 1–22 is disordered; the sequence is MRCPYCGSEDTQVKDSRPAEDN. Residues 3 to 34 fold into a zinc finger; that stretch reads CPYCGSEDTQVKDSRPAEDNTSIRRRRICPDC. A compositionally biased stretch (basic and acidic residues) spans 11–22; the sequence is TQVKDSRPAEDN. Positions 49-139 constitute an ATP-cone domain; the sequence is LMVIKKTGRK…VYRDFSLAED (91 aa).

The protein belongs to the NrdR family. The cofactor is Zn(2+).

Negatively regulates transcription of bacterial ribonucleotide reductase nrd genes and operons by binding to NrdR-boxes. The chain is Transcriptional repressor NrdR from Rhizobium etli (strain CIAT 652).